Consider the following 275-residue polypeptide: Dermonecrotic toxin LamSicTox-alphaIV1ii (275 aa).

The active site involves His-5. Residues Glu-25 and Asp-27 each coordinate Mg(2+). His-41 serves as the catalytic Nucleophile. Intrachain disulfides connect Cys-45-Cys-51 and Cys-47-Cys-192. Asp-85 contributes to the Mg(2+) binding site.

This sequence belongs to the arthropod phospholipase D family. Class II subfamily. Mg(2+) is required as a cofactor. As to expression, expressed by the venom gland.

Its subcellular location is the secreted. The enzyme catalyses an N-(acyl)-sphingosylphosphocholine = an N-(acyl)-sphingosyl-1,3-cyclic phosphate + choline. It carries out the reaction an N-(acyl)-sphingosylphosphoethanolamine = an N-(acyl)-sphingosyl-1,3-cyclic phosphate + ethanolamine. It catalyses the reaction a 1-acyl-sn-glycero-3-phosphocholine = a 1-acyl-sn-glycero-2,3-cyclic phosphate + choline. The catalysed reaction is a 1-acyl-sn-glycero-3-phosphoethanolamine = a 1-acyl-sn-glycero-2,3-cyclic phosphate + ethanolamine. Functionally, dermonecrotic toxins cleave the phosphodiester linkage between the phosphate and headgroup of certain phospholipids (sphingolipid and lysolipid substrates), forming an alcohol (often choline) and a cyclic phosphate. This toxin acts on sphingomyelin (SM). It may also act on ceramide phosphoethanolamine (CPE), lysophosphatidylcholine (LPC) and lysophosphatidylethanolamine (LPE), but not on lysophosphatidylserine (LPS), and lysophosphatidylglycerol (LPG). It acts by transphosphatidylation, releasing exclusively cyclic phosphate products as second products. Induces dermonecrosis, hemolysis, increased vascular permeability, edema, inflammatory response, and platelet aggregation. The sequence is that of Dermonecrotic toxin LamSicTox-alphaIV1ii from Loxosceles amazonica (Recluse spider).